Consider the following 160-residue polypeptide: Putative pre-16S rRNA nuclease (160 aa).

The protein belongs to the YqgF nuclease family.

It localises to the cytoplasm. In terms of biological role, could be a nuclease involved in processing of the 5'-end of pre-16S rRNA. The sequence is that of Putative pre-16S rRNA nuclease from Rhodopseudomonas palustris (strain ATCC BAA-98 / CGA009).